Consider the following 1031-residue polypeptide: uncharacterized protein (1031 aa).

An SWIM-type zinc finger spans residues 50–85 (FKVQINLKTAAAHLDCSCSNDKQNCVHIIAALLKYN). The 162-residue stretch at 590–751 (RALEDNQFGG…WSCFDFVLPN (162 aa)) folds into the Helicase ATP-binding domain. 603 to 610 (DEMGLGKT) is an ATP binding site. The DEAQ box motif lies at 702–705 (DEAQ). In terms of domain architecture, Helicase C-terminal spans 868–1022 (ALNIIYEALE…EDVNFFKSLS (155 aa)).

This sequence belongs to the SNF2/RAD54 helicase family.

This is an uncharacterized protein from Mycoplasma genitalium (strain ATCC 33530 / DSM 19775 / NCTC 10195 / G37) (Mycoplasmoides genitalium).